Here is a 253-residue protein sequence, read N- to C-terminus: MGTILDKIVDQKKKEVAALYETYTPVKEKRKTRSLVKALEQFTVIAEVKRASPSKGDINLHVDVRKQVKTYEECGAGAVSVLTDGQFFKGSFYDLQTAREESSIPLLCKDFIIDKIQIDRAYEAGADIILLIVAALTKEKLKELYSYVLEKGLEAIVEVHDEQELEIAIQLNPHVIGINNRNLKTFEVDLSQTEKLGKRLNEEKLLWISESGVHSKEDMIRVKRAGAKGVLVGEALMTSSSIHTFFEDCKVNI.

It belongs to the TrpC family.

It carries out the reaction 1-(2-carboxyphenylamino)-1-deoxy-D-ribulose 5-phosphate + H(+) = (1S,2R)-1-C-(indol-3-yl)glycerol 3-phosphate + CO2 + H2O. Its pathway is amino-acid biosynthesis; L-tryptophan biosynthesis; L-tryptophan from chorismate: step 4/5. The sequence is that of Indole-3-glycerol phosphate synthase from Bacillus cereus (strain ZK / E33L).